Consider the following 504-residue polypeptide: L-carnitine/gamma-butyrobetaine antiporter (504 aa).

Helical transmembrane passes span Met-10–Val-30, Trp-51–Phe-71, Ile-92–Ile-112, Gly-143–Val-163, Phe-195–Val-215, Leu-231–Leu-251, Ser-263–Met-283, Trp-316–Ala-336, Leu-347–Gly-367, Trp-398–Ala-418, Leu-446–Leu-466, and Ala-475–Ile-495.

The protein belongs to the BCCT transporter (TC 2.A.15) family. CaiT subfamily. In terms of assembly, homotrimer.

The protein localises to the cell inner membrane. The enzyme catalyses 4-(trimethylamino)butanoate(in) + (R)-carnitine(out) = 4-(trimethylamino)butanoate(out) + (R)-carnitine(in). The protein operates within amine and polyamine metabolism; carnitine metabolism. Its function is as follows. Catalyzes the exchange of L-carnitine for gamma-butyrobetaine. The sequence is that of L-carnitine/gamma-butyrobetaine antiporter from Shigella dysenteriae serotype 1 (strain Sd197).